The sequence spans 365 residues: Peptide chain release factor 2 (365 aa).

Position 251 is an N5-methylglutamine (glutamine 251).

Belongs to the prokaryotic/mitochondrial release factor family. Methylated by PrmC. Methylation increases the termination efficiency of RF2.

The protein localises to the cytoplasm. Its function is as follows. Peptide chain release factor 2 directs the termination of translation in response to the peptide chain termination codons UGA and UAA. The chain is Peptide chain release factor 2 from Campylobacter jejuni subsp. jejuni serotype O:6 (strain 81116 / NCTC 11828).